A 298-amino-acid polypeptide reads, in one-letter code: MAKKLSSPKEYKEFIDKFDVFLFDCDGVLWSGSKPIPGVTDTMKLLRSLGKQIIFVSNNSTKSRETYMNKINEHGIAAKLEEIYPSAYSSATYVKKVLKLPADKKVFVLGEAGIEDELDRVGVAHIGGTDPSLRRALASEDVEKIGPDPSVGAVLCGMDMHVTYLKYCMAFQYLQDPNCAFLLTNQDSTFPTNGKFLPGSGAISYPLIFSTGRQPKILGKPYDEMMEAIIANVNFDRKKACFVGDRLNTDIQFAKNSNLGGSLLVLTGVSKEEEILEKDAPVVPDYYVESLAKLAETA.

Homodimer. The N-terminus is blocked.

It catalyses the reaction 4-nitrophenyl phosphate + H2O = 4-nitrophenol + phosphate + H(+). Activity enhanced by Mg(2+) ion but inhibited by Zn(2+) ion. This Schizosaccharomyces pombe (strain 972 / ATCC 24843) (Fission yeast) protein is 4-nitrophenylphosphatase (pho2).